The primary structure comprises 388 residues: Pregnancy-associated glycoprotein (388 aa).

The N-terminal stretch at 1-15 (MKWFGVLGLVTLSEC) is a signal peptide. In terms of domain architecture, Peptidase A1 spans 74–385 (YMGIISVGTP…DRENDRIGLA (312 aa)). The active site involves aspartate 92. 2 disulfides stabilise this stretch: cysteine 105–cysteine 110 and cysteine 266–cysteine 270. The active site involves aspartate 275. A disulfide bridge links cysteine 309 with cysteine 344. Asparagine 356 is a glycosylation site (N-linked (GlcNAc...) asparagine).

This sequence belongs to the peptidase A1 family. In terms of tissue distribution, trophoblast and placental tissue.

Its subcellular location is the secreted. It localises to the extracellular space. This chain is Pregnancy-associated glycoprotein (PAG), found in Equus caballus (Horse).